The following is a 179-amino-acid chain: Fimbrial subunit ElfA (179 aa).

The N-terminal stretch at 1 to 21 (MKKSVLTAFITVVCATSSVMA) is a signal peptide.

This sequence belongs to the fimbrial protein family.

The protein localises to the fimbrium. Functionally, part of the elfADCG-ycbUVF fimbrial operon, which promotes adhesion of bacteria to different abiotic surfaces. ElfA is the major fimbrial subunit produced by this operon. The protein is Fimbrial subunit ElfA (elfA) of Escherichia coli (strain K12).